Here is a 111-residue protein sequence, read N- to C-terminus: Putative G antigen family E member 3 (111 aa).

A disordered region spans residues 1 to 67; it reads MSEHVRTRSQ…EGAPAVQGPD (67 aa). Residues 8-24 show a composition bias toward polar residues; the sequence is RSQSSERGNDQESSQPV. Thr-97 bears the Phosphothreonine mark.

This sequence belongs to the GAGE family.

The chain is Putative G antigen family E member 3 (PAGE2B) from Homo sapiens (Human).